The sequence spans 1274 residues: Vacuolar protein sorting-associated protein 8 (1274 aa).

An N-acetylmethionine modification is found at methionine 1. 3 WD repeats span residues 75 to 119 (THVY…QTIL), 131 to 170 (SIRS…RVKP), and 193 to 233 (HVNK…FWQL). CHCR repeat units lie at residues 507 to 665 (LQQS…YPQN) and 915 to 1092 (FDLL…KYPS). The RING-type; atypical zinc-finger motif lies at 1198–1266 (CEICGKKIWG…PDEYSCLICQ (69 aa)).

It belongs to the VPS8 family.

The protein resides in the golgi apparatus. It localises to the golgi stack. Functionally, required for localization and recycling of the CPY sorting receptor (VPS10) to the late-Golgi compartment. Involved in the retention of proteins to the late-Golgi. Plays an integral role in the complex vacuolar protein sorting process. This chain is Vacuolar protein sorting-associated protein 8 (VPS8), found in Saccharomyces cerevisiae (strain ATCC 204508 / S288c) (Baker's yeast).